Consider the following 230-residue polypeptide: MSEIKDIVVQGLWKNNSALVQLLGLCPLLAVTSTATNALGLGLATTLVLTLTNLTVSALRRWTPAEIRIPIYVMIIASVVSAVQMLINAYAFGLYQSLGIFIPLIVTNCIVVGRAEAFAAKKGPWLSALDGFSIGMGATGAMFVLGSLREILGNGTLFDGADSLLGSWAKVLRVEIFHTDSPFLLAMLPPGAFIGLGLMLAVKYLIDEKMKKRRAVTAPSAVPAGETGKV.

A run of 6 helical transmembrane segments spans residues 18–38, 39–59, 63–83, 86–106, 125–145, and 182–202; these read ALVQ…ATNA, LGLG…VSAL, TPAE…VSAV, LINA…PLIV, WLSA…MFVL, and PFLL…MLAV.

This sequence belongs to the NqrDE/RnfAE family. The complex is composed of six subunits: RsxA, RsxB, RsxC, RsxD, RsxE and RsxG.

Its subcellular location is the cell inner membrane. Its function is as follows. Part of a membrane-bound complex that couples electron transfer with translocation of ions across the membrane. Required to maintain the reduced state of SoxR. This chain is Ion-translocating oxidoreductase complex subunit E, found in Salmonella arizonae (strain ATCC BAA-731 / CDC346-86 / RSK2980).